The following is a 420-amino-acid chain: Phosphoribosylamine--glycine ligase (420 aa).

The region spanning 108 to 314 (KEIMVKYGVS…FAQNITDILD (207 aa)) is the ATP-grasp domain. 134-195 (IEKHGAPIVV…EEFLEGEEFS (62 aa)) is a binding site for ATP. E284 and N286 together coordinate Mg(2+).

This sequence belongs to the GARS family. It depends on Mg(2+) as a cofactor. Requires Mn(2+) as cofactor.

It catalyses the reaction 5-phospho-beta-D-ribosylamine + glycine + ATP = N(1)-(5-phospho-beta-D-ribosyl)glycinamide + ADP + phosphate + H(+). It participates in purine metabolism; IMP biosynthesis via de novo pathway; N(1)-(5-phospho-D-ribosyl)glycinamide from 5-phospho-alpha-D-ribose 1-diphosphate: step 2/2. The polypeptide is Phosphoribosylamine--glycine ligase (Streptococcus pneumoniae (strain ATCC BAA-255 / R6)).